The sequence spans 254 residues: tRNA (guanine-N(7)-)-methyltransferase (254 aa).

Positions 1-11 (MSISDNSREEL) are enriched in basic and acidic residues. The interval 1-25 (MSISDNSREELGELPAGRPLQSEFN) is disordered. S-adenosyl-L-methionine-binding residues include E83, E108, D135, and D158. The active site involves D158. K162 is a substrate binding site. Residues 164–169 (RHNKRR) form an interaction with RNA region. Residues D194 and 232-235 (TKFE) each bind substrate.

The protein belongs to the class I-like SAM-binding methyltransferase superfamily. TrmB family.

The enzyme catalyses guanosine(46) in tRNA + S-adenosyl-L-methionine = N(7)-methylguanosine(46) in tRNA + S-adenosyl-L-homocysteine. Its pathway is tRNA modification; N(7)-methylguanine-tRNA biosynthesis. Its function is as follows. Catalyzes the formation of N(7)-methylguanine at position 46 (m7G46) in tRNA. The chain is tRNA (guanine-N(7)-)-methyltransferase from Corynebacterium efficiens (strain DSM 44549 / YS-314 / AJ 12310 / JCM 11189 / NBRC 100395).